Consider the following 342-residue polypeptide: AA9 family lytic polysaccharide monooxygenase AA9-X282 (342 aa).

The first 18 residues, 1–18 (MKSFASLLFLAATAAAHA), serve as a signal peptide directing secretion. Residue H17 coordinates Cu(2+). Phosphothreonine occurs at positions 19 and 57. Phosphoserine is present on S59. The cysteines at positions 63 and 181 are disulfide-linked. H93 is a binding site for Cu(2+). 2 residues coordinate O2: H167 and Q176. Y178 serves as a coordination point for Cu(2+). A glycan (N-linked (GlcNAc...) asparagine) is linked at N189. The X282 extension stretch occupies residues 233–263 (SPATVANTPYPTTATWNTALQPTTVPTVTPP). The tract at residues 281–302 (VTSQPPVPPTTQQPPVVTPTAP) is disordered. Residues 285–302 (PPVPPTTQQPPVVTPTAP) show a composition bias toward pro residues. One can recognise a CBM1 domain in the interval 306–342 (PLQTQYGQCGGQGWNGPTQCQPPYTCTASNQWYHQCL).

The protein belongs to the polysaccharide monooxygenase AA9 family. The cofactor is Cu(2+).

Its subcellular location is the secreted. It carries out the reaction [(1-&gt;4)-beta-D-glucosyl]n+m + reduced acceptor + O2 = 4-dehydro-beta-D-glucosyl-[(1-&gt;4)-beta-D-glucosyl]n-1 + [(1-&gt;4)-beta-D-glucosyl]m + acceptor + H2O.. Its function is as follows. Lytic polysaccharide monooxygenase (LPMO) that depolymerizes crystalline and amorphous polysaccharides via the oxidation of scissile alpha- or beta-(1-4)-glycosidic bonds, yielding C1 oxidation products. Catalysis by LPMOs requires the reduction of the active-site copper from Cu(II) to Cu(I) by a reducing agent and H(2)O(2) or O(2) as a cosubstrate. Shows only weak binding properties to cellulose, and low cellulolytic oxidative activity which questions the involvement of X282 extension-containing AA9 proteins in the degradation of plant cell wall and opens new avenues as to the divergence of function of some AA9 members. This chain is AA9 family lytic polysaccharide monooxygenase AA9-X282, found in Coprinopsis cinerea (strain Okayama-7 / 130 / ATCC MYA-4618 / FGSC 9003) (Inky cap fungus).